A 235-amino-acid polypeptide reads, in one-letter code: Large ribosomal subunit protein uL1 (235 aa).

This sequence belongs to the universal ribosomal protein uL1 family. As to quaternary structure, part of the 50S ribosomal subunit.

In terms of biological role, binds directly to 23S rRNA. The L1 stalk is quite mobile in the ribosome, and is involved in E site tRNA release. Its function is as follows. Protein L1 is also a translational repressor protein, it controls the translation of the L11 operon by binding to its mRNA. This is Large ribosomal subunit protein uL1 from Symbiobacterium thermophilum (strain DSM 24528 / JCM 14929 / IAM 14863 / T).